We begin with the raw amino-acid sequence, 192 residues long: Dihydrofolate reductase (192 aa).

The DHFR domain occupies 5 to 191; sequence NVAIIVAALK…FTYNYTLWTR (187 aa). NADP(+) is bound by residues Ala11 and 18 to 24; that span reads GIGYKGK. 32 to 37 serves as a coordination point for substrate; that stretch reads EIRYFK. NADP(+) is bound at residue 56–58; it reads RKT. Substrate is bound at residue Arg72. 78 to 80 lines the NADP(+) pocket; sequence SRS. 2 residues coordinate substrate: Ile112 and Tyr118. 113–120 serves as a coordination point for NADP(+); that stretch reads GGAEIYNE.

This sequence belongs to the dihydrofolate reductase family.

It carries out the reaction (6S)-5,6,7,8-tetrahydrofolate + NADP(+) = 7,8-dihydrofolate + NADPH + H(+). The protein operates within cofactor biosynthesis; tetrahydrofolate biosynthesis; 5,6,7,8-tetrahydrofolate from 7,8-dihydrofolate: step 1/1. Key enzyme in folate metabolism. Catalyzes an essential reaction for de novo glycine and purine synthesis, and for DNA precursor synthesis. The sequence is that of Dihydrofolate reductase (DFR1) from Candida albicans (Yeast).